We begin with the raw amino-acid sequence, 120 residues long: Crustacean hyperglycemic hormones 4 (120 aa).

The N-terminal stretch at 1–26 is a signal peptide; it reads MVALNTLSAVSAALLVLAASPSPASA. Cystine bridges form between Cys-53–Cys-89, Cys-69–Cys-85, and Cys-72–Cys-98. Val-118 is modified (valine amide).

It belongs to the arthropod CHH/MIH/GIH/VIH hormone family.

It is found in the secreted. Its function is as follows. Hormone found in the sinus gland of isopods and decapods which controls the blood sugar level. Has a secretagogue action over the amylase released from the midgut gland. May act as a stress hormone and may be involved in the control of molting and reproduction. In Penaeus monodon (Giant tiger prawn), this protein is Crustacean hyperglycemic hormones 4 (CHH4).